A 375-amino-acid polypeptide reads, in one-letter code: tRNA-specific 2-thiouridylase MnmA (375 aa).

Residues 12–19 (GMSGGVDS) and methionine 38 contribute to the ATP site. The segment at 98 to 100 (NPD) is interaction with target base in tRNA. The active-site Nucleophile is the cysteine 103. Cysteine 103 and cysteine 200 form a disulfide bridge. Glycine 127 provides a ligand contact to ATP. The segment at 150-152 (KDQ) is interaction with tRNA. Residue cysteine 200 is the Cysteine persulfide intermediate of the active site. An interaction with tRNA region spans residues 312 to 313 (RY).

This sequence belongs to the MnmA/TRMU family.

It is found in the cytoplasm. It carries out the reaction S-sulfanyl-L-cysteinyl-[protein] + uridine(34) in tRNA + AH2 + ATP = 2-thiouridine(34) in tRNA + L-cysteinyl-[protein] + A + AMP + diphosphate + H(+). Its function is as follows. Catalyzes the 2-thiolation of uridine at the wobble position (U34) of tRNA, leading to the formation of s(2)U34. The polypeptide is tRNA-specific 2-thiouridylase MnmA (Lactobacillus johnsonii (strain CNCM I-12250 / La1 / NCC 533)).